We begin with the raw amino-acid sequence, 329 residues long: Acetyl-coenzyme A carboxylase carboxyl transferase subunit alpha (329 aa).

A CoA carboxyltransferase C-terminal domain is found at 40-294 (QLETLAARRR…KESLIRNLRE (255 aa)).

It belongs to the AccA family. Acetyl-CoA carboxylase is a heterohexamer composed of biotin carboxyl carrier protein (AccB), biotin carboxylase (AccC) and two subunits each of ACCase subunit alpha (AccA) and ACCase subunit beta (AccD).

It is found in the cytoplasm. It carries out the reaction N(6)-carboxybiotinyl-L-lysyl-[protein] + acetyl-CoA = N(6)-biotinyl-L-lysyl-[protein] + malonyl-CoA. The protein operates within lipid metabolism; malonyl-CoA biosynthesis; malonyl-CoA from acetyl-CoA: step 1/1. In terms of biological role, component of the acetyl coenzyme A carboxylase (ACC) complex. First, biotin carboxylase catalyzes the carboxylation of biotin on its carrier protein (BCCP) and then the CO(2) group is transferred by the carboxyltransferase to acetyl-CoA to form malonyl-CoA. This Prochlorococcus marinus (strain MIT 9211) protein is Acetyl-coenzyme A carboxylase carboxyl transferase subunit alpha.